A 40-amino-acid chain; its full sequence is Submaxillary gland androgen-regulated protein 2, isoform epsilon (40 aa).

A signal peptide spans 1–20; sequence MKALYMVFVLWVLIGCFLRC.

The protein localises to the secreted. In terms of biological role, may play a role in protection or detoxification. This chain is Submaxillary gland androgen-regulated protein 2, isoform epsilon (Smr2), found in Mus musculus (Mouse).